Consider the following 284-residue polypeptide: Diaminopimelate epimerase (284 aa).

Substrate is bound by residues Asn20, Gln53, and Asn73. Cys82 acts as the Proton donor in catalysis. Substrate is bound by residues Gly83–Asn84, Asn167, Asn200, and Glu218–Arg219. Cys227 (proton acceptor) is an active-site residue. Gly228 to Ser229 is a binding site for substrate.

This sequence belongs to the diaminopimelate epimerase family. Homodimer.

It is found in the cytoplasm. The enzyme catalyses (2S,6S)-2,6-diaminopimelate = meso-2,6-diaminopimelate. It functions in the pathway amino-acid biosynthesis; L-lysine biosynthesis via DAP pathway; DL-2,6-diaminopimelate from LL-2,6-diaminopimelate: step 1/1. Functionally, catalyzes the stereoinversion of LL-2,6-diaminopimelate (L,L-DAP) to meso-diaminopimelate (meso-DAP), a precursor of L-lysine and an essential component of the bacterial peptidoglycan. This chain is Diaminopimelate epimerase, found in Xanthomonas axonopodis pv. citri (strain 306).